The sequence spans 312 residues: DNA-directed RNA polymerase subunit alpha (312 aa).

An alpha N-terminal domain (alpha-NTD) region spans residues 1–226 (MIEFEKPIIT…EHLNLFTDLT (226 aa)). The tract at residues 242 to 312 (NDEKVLDRTI…DLGLGLKNDK (71 aa)) is alpha C-terminal domain (alpha-CTD).

The protein belongs to the RNA polymerase alpha chain family. As to quaternary structure, homodimer. The RNAP catalytic core consists of 2 alpha, 1 beta, 1 beta' and 1 omega subunit. When a sigma factor is associated with the core the holoenzyme is formed, which can initiate transcription.

It carries out the reaction RNA(n) + a ribonucleoside 5'-triphosphate = RNA(n+1) + diphosphate. Its function is as follows. DNA-dependent RNA polymerase catalyzes the transcription of DNA into RNA using the four ribonucleoside triphosphates as substrates. This is DNA-directed RNA polymerase subunit alpha from Streptococcus agalactiae serotype Ia (strain ATCC 27591 / A909 / CDC SS700).